The sequence spans 162 residues: Sec-independent protein translocase protein TatB (162 aa).

The helical transmembrane segment at Met1–Gly21 threads the bilayer. The disordered stretch occupies residues Ile86–Ser162. Positions Phe108 to Pro117 are enriched in polar residues. The span at Pro123–Thr135 shows a compositional bias: low complexity. A compositionally biased stretch (polar residues) spans Asp147 to Ser162.

The protein belongs to the TatB family. The Tat system comprises two distinct complexes: a TatABC complex, containing multiple copies of TatA, TatB and TatC subunits, and a separate TatA complex, containing only TatA subunits. Substrates initially bind to the TatABC complex, which probably triggers association of the separate TatA complex to form the active translocon.

The protein resides in the cell inner membrane. In terms of biological role, part of the twin-arginine translocation (Tat) system that transports large folded proteins containing a characteristic twin-arginine motif in their signal peptide across membranes. Together with TatC, TatB is part of a receptor directly interacting with Tat signal peptides. TatB may form an oligomeric binding site that transiently accommodates folded Tat precursor proteins before their translocation. This chain is Sec-independent protein translocase protein TatB, found in Hydrogenovibrio crunogenus (strain DSM 25203 / XCL-2) (Thiomicrospira crunogena).